The primary structure comprises 317 residues: MQILLANPRGFCAGVDRAISIVERALEIYGAPIYVRHEVVHNRYVVDSLRERGAVFIEEITEVPDGSILIFSAHGVSQAVRAEAKARDLTMLFDATCPLVTKVHMEVARASRRGTEAILIGHAGHPEVEGTMGQYSNPKGGMYLVESPDDVWKLQVKDESNLCFMTQTTLSVDDTSDVIDALRKRFPSIIGPRKDDICYATTNRQEAVRNLAGDADVVLVVGSKNSSNSNRLAELAQRVGKPAYLIDSAADIQEAWLKDAHNIGVTAGASAPDVLVQDVISRLKALGGVNVQEVSGREENIVFEVPKELRVDIKQVD.

Residue Cys-12 participates in [4Fe-4S] cluster binding. (2E)-4-hydroxy-3-methylbut-2-enyl diphosphate is bound by residues His-41 and His-74. His-41 and His-74 together coordinate dimethylallyl diphosphate. Isopentenyl diphosphate contacts are provided by His-41 and His-74. Cys-97 serves as a coordination point for [4Fe-4S] cluster. Residue His-125 coordinates (2E)-4-hydroxy-3-methylbut-2-enyl diphosphate. Residue His-125 coordinates dimethylallyl diphosphate. His-125 is an isopentenyl diphosphate binding site. The active-site Proton donor is Glu-127. Thr-168 is a (2E)-4-hydroxy-3-methylbut-2-enyl diphosphate binding site. Cys-198 is a [4Fe-4S] cluster binding site. Residues Ser-226, Ser-227, Asn-228, and Ser-270 each contribute to the (2E)-4-hydroxy-3-methylbut-2-enyl diphosphate site. Residues Ser-226, Ser-227, Asn-228, and Ser-270 each coordinate dimethylallyl diphosphate. Isopentenyl diphosphate-binding residues include Ser-226, Ser-227, Asn-228, and Ser-270.

It belongs to the IspH family. As to quaternary structure, homodimer. The cofactor is [4Fe-4S] cluster.

The catalysed reaction is isopentenyl diphosphate + 2 oxidized [2Fe-2S]-[ferredoxin] + H2O = (2E)-4-hydroxy-3-methylbut-2-enyl diphosphate + 2 reduced [2Fe-2S]-[ferredoxin] + 2 H(+). It carries out the reaction dimethylallyl diphosphate + 2 oxidized [2Fe-2S]-[ferredoxin] + H2O = (2E)-4-hydroxy-3-methylbut-2-enyl diphosphate + 2 reduced [2Fe-2S]-[ferredoxin] + 2 H(+). Its pathway is isoprenoid biosynthesis; dimethylallyl diphosphate biosynthesis; dimethylallyl diphosphate from (2E)-4-hydroxy-3-methylbutenyl diphosphate: step 1/1. It functions in the pathway isoprenoid biosynthesis; isopentenyl diphosphate biosynthesis via DXP pathway; isopentenyl diphosphate from 1-deoxy-D-xylulose 5-phosphate: step 6/6. Its function is as follows. Catalyzes the conversion of 1-hydroxy-2-methyl-2-(E)-butenyl 4-diphosphate (HMBPP) into a mixture of isopentenyl diphosphate (IPP) and dimethylallyl diphosphate (DMAPP). Acts in the terminal step of the DOXP/MEP pathway for isoprenoid precursor biosynthesis. The chain is 4-hydroxy-3-methylbut-2-enyl diphosphate reductase from Serratia proteamaculans (strain 568).